A 346-amino-acid polypeptide reads, in one-letter code: uncharacterized protein (346 aa).

Belongs to the PhyH family.

It is found in the cytoplasm. This is an uncharacterized protein from Saccharomyces cerevisiae (strain ATCC 204508 / S288c) (Baker's yeast).